A 200-amino-acid chain; its full sequence is Phospholipase A2 inhibitor gamma subunit A (200 aa).

The first 19 residues, 1–19 (MKSLHTICLLFIFIARGNS), serve as a signal peptide directing secretion. 8 disulfide bridges follow: cysteine 22/cysteine 46, cysteine 25/cysteine 32, cysteine 39/cysteine 67, cysteine 73/cysteine 94, cysteine 95/cysteine 100, cysteine 118/cysteine 143, cysteine 136/cysteine 165, and cysteine 169/cysteine 191. N-linked (GlcNAc...) asparagine glycosylation occurs at asparagine 176.

Belongs to the CNF-like-inhibitor family. In terms of assembly, occurs as a mixture of oligomers. Tetrameric arrangement appears to be the predominant quaternary structure. As to expression, expressed by the liver.

The protein resides in the secreted. Inhibits the enzymatic activity of phospholipase A2 (PA2). The sequence is that of Phospholipase A2 inhibitor gamma subunit A from Gloydius brevicaudus siniticus (Chinese mamushi).